A 227-amino-acid chain; its full sequence is Cytochrome c oxidase subunit 2 (227 aa).

Topologically, residues 1–14 (MAHAAQVGLQDATS) are mitochondrial intermembrane. The chain crosses the membrane as a helical span at residues 15–45 (PIMEELIIFHDHALMIIFLICFLVLYALFLT). Residues 46-59 (LTTKLTNTSISDAQ) are Mitochondrial matrix-facing. Residues 60–87 (EMETVWTILPAIILVLIALPSLRILYMT) form a helical membrane-spanning segment. At 88–227 (DEVNDPSFTI…IFEMGPVFTL (140 aa)) the chain is on the mitochondrial intermembrane side. Residues histidine 161, cysteine 196, glutamate 198, cysteine 200, histidine 204, and methionine 207 each coordinate Cu cation. Mg(2+) is bound at residue glutamate 198.

This sequence belongs to the cytochrome c oxidase subunit 2 family. In terms of assembly, component of the cytochrome c oxidase (complex IV, CIV), a multisubunit enzyme composed of 14 subunits. The complex is composed of a catalytic core of 3 subunits MT-CO1, MT-CO2 and MT-CO3, encoded in the mitochondrial DNA, and 11 supernumerary subunits COX4I, COX5A, COX5B, COX6A, COX6B, COX6C, COX7A, COX7B, COX7C, COX8 and NDUFA4, which are encoded in the nuclear genome. The complex exists as a monomer or a dimer and forms supercomplexes (SCs) in the inner mitochondrial membrane with NADH-ubiquinone oxidoreductase (complex I, CI) and ubiquinol-cytochrome c oxidoreductase (cytochrome b-c1 complex, complex III, CIII), resulting in different assemblies (supercomplex SCI(1)III(2)IV(1) and megacomplex MCI(2)III(2)IV(2)). Found in a complex with TMEM177, COA6, COX18, COX20, SCO1 and SCO2. Interacts with TMEM177 in a COX20-dependent manner. Interacts with COX20. Interacts with COX16. The cofactor is Cu cation.

The protein localises to the mitochondrion inner membrane. The catalysed reaction is 4 Fe(II)-[cytochrome c] + O2 + 8 H(+)(in) = 4 Fe(III)-[cytochrome c] + 2 H2O + 4 H(+)(out). Its function is as follows. Component of the cytochrome c oxidase, the last enzyme in the mitochondrial electron transport chain which drives oxidative phosphorylation. The respiratory chain contains 3 multisubunit complexes succinate dehydrogenase (complex II, CII), ubiquinol-cytochrome c oxidoreductase (cytochrome b-c1 complex, complex III, CIII) and cytochrome c oxidase (complex IV, CIV), that cooperate to transfer electrons derived from NADH and succinate to molecular oxygen, creating an electrochemical gradient over the inner membrane that drives transmembrane transport and the ATP synthase. Cytochrome c oxidase is the component of the respiratory chain that catalyzes the reduction of oxygen to water. Electrons originating from reduced cytochrome c in the intermembrane space (IMS) are transferred via the dinuclear copper A center (CU(A)) of subunit 2 and heme A of subunit 1 to the active site in subunit 1, a binuclear center (BNC) formed by heme A3 and copper B (CU(B)). The BNC reduces molecular oxygen to 2 water molecules using 4 electrons from cytochrome c in the IMS and 4 protons from the mitochondrial matrix. This chain is Cytochrome c oxidase subunit 2 (MT-CO2), found in Pan troglodytes (Chimpanzee).